A 340-amino-acid polypeptide reads, in one-letter code: Phospho-N-acetylmuramoyl-pentapeptide-transferase (340 aa).

10 helical membrane-spanning segments follow: residues M3–I23, G53–F73, A79–L99, M119–T139, I144–V164, I176–F196, E200–F220, V227–A247, V250–L270, and V315–L335.

It belongs to the glycosyltransferase 4 family. MraY subfamily. Mg(2+) is required as a cofactor.

The protein localises to the cell membrane. The catalysed reaction is UDP-N-acetyl-alpha-D-muramoyl-L-alanyl-gamma-D-glutamyl-L-lysyl-D-alanyl-D-alanine + di-trans,octa-cis-undecaprenyl phosphate = Mur2Ac(oyl-L-Ala-gamma-D-Glu-L-Lys-D-Ala-D-Ala)-di-trans,octa-cis-undecaprenyl diphosphate + UMP. It participates in cell wall biogenesis; peptidoglycan biosynthesis. Catalyzes the initial step of the lipid cycle reactions in the biosynthesis of the cell wall peptidoglycan: transfers peptidoglycan precursor phospho-MurNAc-pentapeptide from UDP-MurNAc-pentapeptide onto the lipid carrier undecaprenyl phosphate, yielding undecaprenyl-pyrophosphoryl-MurNAc-pentapeptide, known as lipid I. The polypeptide is Phospho-N-acetylmuramoyl-pentapeptide-transferase (Streptococcus thermophilus (strain ATCC BAA-250 / LMG 18311)).